We begin with the raw amino-acid sequence, 63 residues long: Protein DsrB (63 aa).

The protein belongs to the DsrB family.

This Yersinia pseudotuberculosis serotype O:3 (strain YPIII) protein is Protein DsrB.